The primary structure comprises 342 residues: Cathepsin B-like cysteine proteinase 2 (342 aa).

The N-terminal stretch at 1-18 is a signal peptide; it reads MKYLVLALCTYLCSQSGA. The propeptide at 19 to 86 is activation peptide; that stretch reads DENAAQGIPL…VKEDPDPEVD (68 aa). A glycan (N-linked (GlcNAc...) asparagine) is linked at Asn-99. 6 disulfide bridges follow: Cys-100/Cys-128, Cys-111/Cys-156, Cys-147/Cys-214, Cys-148/Cys-152, Cys-185/Cys-218, and Cys-193/Cys-205. Cys-114 is a catalytic residue. Residue Asn-138 is glycosylated (N-linked (GlcNAc...) asparagine). Asn-198 carries N-linked (GlcNAc...) asparagine glycosylation. The active site involves His-285. Asn-296 is a glycosylation site (N-linked (GlcNAc...) asparagine). Residue Asn-305 is part of the active site.

This sequence belongs to the peptidase C1 family.

In terms of biological role, expression of the protease correlates with blood-feeding and suggests a role for the protease in blood digestion. This chain is Cathepsin B-like cysteine proteinase 2 (AC-2), found in Haemonchus contortus (Barber pole worm).